Here is a 34-residue protein sequence, read N- to C-terminus: MESVAYILIFTLTIGTLFFAVAFREPPRIERKEK.

A helical transmembrane segment spans residues 3-23 (SVAYILIFTLTIGTLFFAVAF).

It belongs to the PsbT family. In terms of assembly, PSII is composed of 1 copy each of membrane proteins PsbA, PsbB, PsbC, PsbD, PsbE, PsbF, PsbH, PsbI, PsbJ, PsbK, PsbL, PsbM, PsbT, PsbX, PsbY, PsbZ, Psb30/Ycf12, peripheral proteins PsbO, CyanoQ (PsbQ), PsbU, PsbV and a large number of cofactors. It forms dimeric complexes.

Its subcellular location is the cellular thylakoid membrane. In terms of biological role, found at the monomer-monomer interface of the photosystem II (PS II) dimer, plays a role in assembly and dimerization of PSII. PSII is a light-driven water plastoquinone oxidoreductase, using light energy to abstract electrons from H(2)O, generating a proton gradient subsequently used for ATP formation. This chain is Photosystem II reaction center protein T, found in Mastigocladus laminosus (Fischerella sp.).